Consider the following 392-residue polypeptide: Imidazolonepropionase (392 aa).

Positions 69 and 71 each coordinate Fe(3+). 2 residues coordinate Zn(2+): histidine 69 and histidine 71. 4-imidazolone-5-propanoate contacts are provided by arginine 78, tyrosine 136, and histidine 163. An N-formimidoyl-L-glutamate-binding site is contributed by tyrosine 136. Histidine 226 is a Fe(3+) binding site. Histidine 226 is a binding site for Zn(2+). Glutamine 229 contacts 4-imidazolone-5-propanoate. A Fe(3+)-binding site is contributed by aspartate 302. Residue aspartate 302 coordinates Zn(2+). Residues asparagine 304 and glycine 306 each coordinate N-formimidoyl-L-glutamate. Residue serine 307 participates in 4-imidazolone-5-propanoate binding.

The protein belongs to the metallo-dependent hydrolases superfamily. HutI family. The cofactor is Zn(2+). It depends on Fe(3+) as a cofactor.

The protein resides in the cytoplasm. It catalyses the reaction 4-imidazolone-5-propanoate + H2O = N-formimidoyl-L-glutamate. Its pathway is amino-acid degradation; L-histidine degradation into L-glutamate; N-formimidoyl-L-glutamate from L-histidine: step 3/3. Catalyzes the hydrolytic cleavage of the carbon-nitrogen bond in imidazolone-5-propanoate to yield N-formimidoyl-L-glutamate. It is the third step in the universal histidine degradation pathway. The protein is Imidazolonepropionase of Salinispora arenicola (strain CNS-205).